The sequence spans 1014 residues: MICAL-like protein 2 (1014 aa).

In terms of domain architecture, Calponin-homology (CH) spans 1 to 107 (MAAIKALQEW…YVSQYYNYFH (107 aa)). Residues 1-261 (MAAIKALQEW…KLSNLASRQP (261 aa)) are forms an intramolecular interaction with the C-terminal coiled coil domain keeping the protein in a closed conformation. A phosphoserine mark is found at S110, S144, and S154. Positions 114 to 181 (GMAGMKRPSS…PSPKAAPGTV (68 aa)) are disordered. Residues 187 to 249 (SICGVCGKHV…THHSSEAVSV (63 aa)) form the LIM zinc-binding domain. Position 250 is a phosphoserine (S250). Positions 262-394 (GGGIADTRPI…QGQAASKGVK (133 aa)) are necessary and sufficient for interaction with actinins. The mediates targeting to the cell plasma membrane stretch occupies residues 262 to 810 (GGGIADTRPI…QDDQTRSCKE (549 aa)). 2 disordered regions span residues 311–450 (LTPP…SRVP) and 609–780 (TLPK…RRKK). The span at 332–355 (STVTTTSANSKATTHVTNSSPVGW) shows a compositional bias: polar residues. Residues 356 to 368 (SSSAQSSTGTSGS) are compositionally biased toward low complexity. Residues 384 to 398 (PQGQAASKGVKTQLN) are compositionally biased toward polar residues. Composition is skewed to low complexity over residues 399-419 (SSTDSSSTAPTPAWTSSSSRT) and 438-447 (PASSSSSHAS). 2 stretches are compositionally biased toward polar residues: residues 624 to 633 (LSHSTTQAFS) and 646 to 656 (VGSTSWTSVSL). Basic and acidic residues-rich tracts occupy residues 701–711 (EGWRARLKPVD) and 720–737 (LEQKEPVLAEPRAGDTPR). Residues 747-758 (IHITLTPIQQKR) show a composition bias toward polar residues. At T759 the chain carries Phosphothreonine. 2 positions are modified to phosphoserine: S773 and S837. The forms an intramolecular interaction with the N-terminal Calponin-homology and LIM zinc-binding domains-containing region keeping the protein in a closed conformation stretch occupies residues 811 to 918 (KTATWGTRES…LMYKSKDQCL (108 aa)). Residues 838–985 (PVRLHPNYIS…EQEEDQMLES (148 aa)) form the bMERB domain. Residues 845–885 (YISQEELQRQLQDIERQLDALELRGVELEKRLRAAEGDASE) are a coiled coil. A mediates interaction with RAB13 and is required for transition from the closed to the open conformation region spans residues 918 to 1014 (LEERQLDLQG…WSSKSKSGQT (97 aa)).

In terms of assembly, interacts with RAB13 (GTP-bound form); competes with RAB8A and is involved in tight junctions assembly. Interacts with RAB8A; competes with RAB13 and is involved in E-cadherin endocytic recycling. Interacts with RAB8B. Interacts (preferentially in opened conformation) with ACTN1 and ACTN4; stimulated by RAB13 activation. Interacts (via calponin-homology (CH) domain) with the filamins FLNA, FLNB and FLNC (via actin-binding domain).

Its subcellular location is the cell membrane. It is found in the cell junction. The protein localises to the tight junction. It localises to the recycling endosome. The protein resides in the cell projection. Its subcellular location is the neuron projection. It is found in the cytoplasm. The protein localises to the cytoskeleton. Effector of small Rab GTPases which is involved in junctional complexes assembly through the regulation of cell adhesion molecules transport to the plasma membrane and actin cytoskeleton reorganization. Regulates the endocytic recycling of occludins, claudins and E-cadherin to the plasma membrane and may thereby regulate the establishment of tight junctions and adherens junctions. In parallel, may regulate actin cytoskeleton reorganization directly through interaction with F-actin or indirectly through actinins and filamins. Most probably involved in the processes of epithelial cell differentiation, cell spreading and neurite outgrowth. Undergoes liquid-liquid phase separation to form tubular recycling endosomes. Plays 2 sequential roles in the biogenesis of tubular recycling endosomes: first organizes phase separation and then the closed form formed by interaction with RAB8A promotes endosomal tubulation. The protein is MICAL-like protein 2 (Micall2) of Rattus norvegicus (Rat).